The primary structure comprises 377 residues: EPS I polysaccharide export outer membrane protein EpsA (377 aa).

A signal peptide spans 1-23 (MFVSIPSIRKTVMSLCAVPLMAA). C24 carries the N-palmitoyl cysteine lipid modification. C24 carries S-diacylglycerol cysteine lipidation.

The protein belongs to the BexD/CtrA/VexA family.

The protein resides in the cell outer membrane. In terms of biological role, probably involved in polymerization and/or export of exopolysaccharide EPS I which functions as a virulence factor. This Ralstonia solanacearum (Pseudomonas solanacearum) protein is EPS I polysaccharide export outer membrane protein EpsA (epsA).